Here is a 282-residue protein sequence, read N- to C-terminus: MEIIEKAPAKINLGLDIAGKYQDGFHELSMIMASVDLNDYLTITEIAEDKIVVESNNCKLPLNRKNDVYKAAHLLKRRYHISTGLKISLQKKIPICAGLGGGSSDAAATLRALNCLWKLNLSPKELIDVGFEIGSDVPYCIEAGCALISGKGEIVEPLATTLSTWVVLVKPDFGISTKTIFKEIDMATISRVDIPALKEALLANYYEDALQFMGNSLEDITIAKKPFIQKIKGRMIKCGADIALMTGSGPTVFALCRTEKRADRVVNSMKGFCKEVYKVRML.

The active site involves Lys-10. ATP is bound at residue 94–104 (PICAGLGGGSS). Asp-136 is a catalytic residue.

Belongs to the GHMP kinase family. IspE subfamily.

It catalyses the reaction 4-CDP-2-C-methyl-D-erythritol + ATP = 4-CDP-2-C-methyl-D-erythritol 2-phosphate + ADP + H(+). Functionally, catalyzes the phosphorylation of the position 2 hydroxy group of 4-diphosphocytidyl-2C-methyl-D-erythritol. The protein is Putative 4-diphosphocytidyl-2-C-methyl-D-erythritol kinase (ipk) of Streptococcus mutans serotype c (strain ATCC 700610 / UA159).